The primary structure comprises 378 residues: Putative dioxygenase VC_1345 (378 aa).

H288, D294, and H324 together coordinate Fe cation.

This sequence belongs to the homogentisate dioxygenase family. Fe cation is required as a cofactor.

This Vibrio cholerae serotype O1 (strain ATCC 39315 / El Tor Inaba N16961) protein is Putative dioxygenase VC_1345.